The sequence spans 492 residues: Steroid 21-hydroxylase (492 aa).

Heme b-binding residues include Arg91 and Lys120. Arg231 lines the 17alpha-hydroxyprogesterone pocket. Residue Arg231 coordinates progesterone. Residues His363, Arg424, and Cys426 each contribute to the heme b site.

The protein belongs to the cytochrome P450 family. It depends on heme b as a cofactor.

It is found in the endoplasmic reticulum membrane. It localises to the microsome membrane. It catalyses the reaction 17alpha-hydroxyprogesterone + reduced [NADPH--hemoprotein reductase] + O2 = 11-deoxycortisol + oxidized [NADPH--hemoprotein reductase] + H2O + H(+). The enzyme catalyses progesterone + reduced [NADPH--hemoprotein reductase] + O2 = 21-hydroxyprogesterone + oxidized [NADPH--hemoprotein reductase] + H2O + H(+). In terms of biological role, specifically catalyzes the 21-hydroxylation of steroids. Required for the adrenal synthesis of mineralocorticoids and glucocorticoids. The chain is Steroid 21-hydroxylase (CYP21) from Lynx lynx (Eurasian lynx).